We begin with the raw amino-acid sequence, 453 residues long: Chromosomal replication initiator protein DnaA (453 aa).

The interval 1–79 (MKSLIQEKWN…KTAIAEVINQ (79 aa)) is domain I, interacts with DnaA modulators. Residues 79–111 (QDFEIEFVLLSQTKAEEKVQTQAPNKIKNESLS) are domain II. Positions 112-330 (YLNPRYTFDT…GALTKIVALS (219 aa)) are domain III, AAA+ region. Residues glycine 156, glycine 158, lysine 159, and threonine 160 each contribute to the ATP site. The domain IV, binds dsDNA stretch occupies residues 331–453 (RLKKKEVDVI…VLIKKINPTP (123 aa)).

Belongs to the DnaA family. As to quaternary structure, oligomerizes as a right-handed, spiral filament on DNA at oriC.

The protein localises to the cytoplasm. Its function is as follows. Plays an essential role in the initiation and regulation of chromosomal replication. ATP-DnaA binds to the origin of replication (oriC) to initiate formation of the DNA replication initiation complex once per cell cycle. Binds the DnaA box (a 9 base pair repeat at the origin) and separates the double-stranded (ds)DNA. Forms a right-handed helical filament on oriC DNA; dsDNA binds to the exterior of the filament while single-stranded (ss)DNA is stabiized in the filament's interior. The ATP-DnaA-oriC complex binds and stabilizes one strand of the AT-rich DNA unwinding element (DUE), permitting loading of DNA polymerase. After initiation quickly degrades to an ADP-DnaA complex that is not apt for DNA replication. Binds acidic phospholipids. This is Chromosomal replication initiator protein DnaA from Lachnoclostridium phytofermentans (strain ATCC 700394 / DSM 18823 / ISDg) (Clostridium phytofermentans).